The following is a 138-amino-acid chain: Histone H2AX (138 aa).

A disordered region spans residues 1-23 (MSTTGKGGKAKGKTASSKQVSRS). The residue at position 2 (Ser-2) is an N-acetylserine. 5 positions are modified to N6-acetyllysine: Lys-6, Lys-9, Lys-11, Lys-13, and Lys-18. Phosphoserine is present on Ser-123. Lys-124 participates in a covalent cross-link: Glycyl lysine isopeptide (Lys-Gly) (interchain with G-Cter in ubiquitin). 3 positions are modified to phosphoserine: Ser-125, Ser-130, and Ser-135. The [ST]-Q motif signature appears at 135–136 (SQ).

The protein belongs to the histone H2A family. The nucleosome is a histone octamer containing two molecules each of H2A, H2B, H3 and H4 assembled in one H3-H4 heterotetramer and two H2A-H2B heterodimers. The octamer wraps approximately 147 bp of DNA. Post-translationally, monoubiquitination of Lys-124 gives a specific tag for epigenetic transcriptional repression. In terms of processing, acetylation occurs almost exclusively in the MAC.

It localises to the nucleus. The protein resides in the chromosome. In terms of biological role, core component of nucleosome. Nucleosomes wrap and compact DNA into chromatin, limiting DNA accessibility to the cellular machineries which require DNA as a template. Histones thereby play a central role in transcription regulation, DNA repair, DNA replication and chromosomal stability. DNA accessibility is regulated via a complex set of post-translational modifications of histones, also called histone code, and nucleosome remodeling. The chain is Histone H2AX (HTA1) from Tetrahymena pyriformis.